Reading from the N-terminus, the 300-residue chain is Polyamine aminopropyltransferase (300 aa).

The PABS domain occupies 4-237; sequence WHWHIEWQTP…GLWGFVYASD (234 aa). Glutamine 33 is an S-methyl-5'-thioadenosine binding site. Spermidine is bound by residues histidine 64 and glutamate 88. S-methyl-5'-thioadenosine contacts are provided by residues aspartate 108 and 140 to 141; that span reads DG. Aspartate 158 serves as the catalytic Proton acceptor. S-methyl-5'-thioadenosine is bound at residue proline 167.

Belongs to the spermidine/spermine synthase family. Homodimer or homotetramer.

Its subcellular location is the cytoplasm. It catalyses the reaction S-adenosyl 3-(methylsulfanyl)propylamine + putrescine = S-methyl-5'-thioadenosine + spermidine + H(+). It functions in the pathway amine and polyamine biosynthesis; spermidine biosynthesis; spermidine from putrescine: step 1/1. In terms of biological role, catalyzes the irreversible transfer of a propylamine group from the amino donor S-adenosylmethioninamine (decarboxy-AdoMet) to putrescine (1,4-diaminobutane) to yield spermidine. This is Polyamine aminopropyltransferase from Sulfurisphaera tokodaii (strain DSM 16993 / JCM 10545 / NBRC 100140 / 7) (Sulfolobus tokodaii).